The chain runs to 362 residues: Probable endopolygalacturonase B (362 aa).

The N-terminal stretch at 1–20 (MHFLQNAVVAATMGAALAAA) is a signal peptide. The propeptide occupies 21–25 (APLEK). Residues C28 and C43 are joined by a disulfide bond. PbH1 repeat units follow at residues 155-184 (ADHLTITDVTIDNSAGTSKGHNTDAFDIGQ), 185-206 (STYITIDGATVYNQDDCLAINS), 207-227 (GEHITFTNGYCDGGHGLSIGS), 236-257 (VNDVTISNSKVLNSQNGVRIKT), 265-287 (VENVKFEDITLSDISKYGIVVEQ), and 299-344 (TNGV…DVTG). Catalysis depends on D199, which acts as the Proton donor. An intrachain disulfide couples C201 to C217. The active site involves H221. C327 and C332 form a disulfide bridge. The N-linked (GlcNAc...) asparagine glycan is linked to N334. C351 and C360 are joined by a disulfide.

The protein belongs to the glycosyl hydrolase 28 family.

The protein resides in the secreted. The catalysed reaction is (1,4-alpha-D-galacturonosyl)n+m + H2O = (1,4-alpha-D-galacturonosyl)n + (1,4-alpha-D-galacturonosyl)m.. Involved in maceration and soft-rotting of plant tissue. Hydrolyzes the 1,4-alpha glycosidic bonds of de-esterified pectate in the smooth region of the plant cell wall. This chain is Probable endopolygalacturonase B (pgaB), found in Aspergillus niger (strain ATCC MYA-4892 / CBS 513.88 / FGSC A1513).